Consider the following 338-residue polypeptide: Bacteriochlorophyllide d C-20 methyltransferase (338 aa).

Position 147 (Glu-147) interacts with S-adenosyl-L-methionine. His-150 is a binding site for substrate. S-adenosyl-L-methionine is bound by residues Gly-177, Asn-200, 227 to 228, and 242 to 243; these read DI and CR. The active-site Nucleophile is the Tyr-246. His-290 lines the a bacteriochlorophyll d pocket.

This sequence belongs to the class I-like SAM-binding methyltransferase superfamily. Cation-independent O-methyltransferase family. Homodimer.

The enzyme catalyses a bacteriochlorophyllide d + S-adenosyl-L-methionine = a bacteriochlorophyllide c + S-adenosyl-L-homocysteine + H(+). It participates in porphyrin-containing compound metabolism; bacteriochlorophyll biosynthesis (light-independent). In terms of biological role, involved in the biosynthesis of the major light-harvesting pigment bacteriochlorophyll c (BChlc), which confers a significant competitive advantage to green sulfur bacteria living at limiting red and near-infrared light intensities. Catalyzes the methylation at the C-20 position of the cyclic tetrapyrrole chlorin of bacteriochlorophyll d (BChld) to produce bacteriochlorophyll c (BChlc) using S-adenosylmethionine (SAM) as a methyl source. This Chlorobaculum tepidum (strain ATCC 49652 / DSM 12025 / NBRC 103806 / TLS) (Chlorobium tepidum) protein is Bacteriochlorophyllide d C-20 methyltransferase.